The sequence spans 1412 residues: DNA-directed RNA polymerase subunit beta' (1412 aa).

Residues C70, C72, C85, and C88 each coordinate Zn(2+). Residues D460, D462, and D464 each coordinate Mg(2+). Positions 819, 893, 900, and 903 each coordinate Zn(2+). Positions 1392–1412 are disordered; sequence EEAFEFGTPSTPAEEPQHPAE.

It belongs to the RNA polymerase beta' chain family. In terms of assembly, the RNAP catalytic core consists of 2 alpha, 1 beta, 1 beta' and 1 omega subunit. When a sigma factor is associated with the core the holoenzyme is formed, which can initiate transcription. Mg(2+) is required as a cofactor. The cofactor is Zn(2+).

It carries out the reaction RNA(n) + a ribonucleoside 5'-triphosphate = RNA(n+1) + diphosphate. DNA-dependent RNA polymerase catalyzes the transcription of DNA into RNA using the four ribonucleoside triphosphates as substrates. The chain is DNA-directed RNA polymerase subunit beta' from Burkholderia thailandensis (strain ATCC 700388 / DSM 13276 / CCUG 48851 / CIP 106301 / E264).